Here is a 469-residue protein sequence, read N- to C-terminus: 3-isopropylmalate dehydratase large subunit (469 aa).

3 residues coordinate [4Fe-4S] cluster: Cys-350, Cys-410, and Cys-413.

The protein belongs to the aconitase/IPM isomerase family. LeuC type 1 subfamily. In terms of assembly, heterodimer of LeuC and LeuD. [4Fe-4S] cluster serves as cofactor.

The catalysed reaction is (2R,3S)-3-isopropylmalate = (2S)-2-isopropylmalate. Its pathway is amino-acid biosynthesis; L-leucine biosynthesis; L-leucine from 3-methyl-2-oxobutanoate: step 2/4. Functionally, catalyzes the isomerization between 2-isopropylmalate and 3-isopropylmalate, via the formation of 2-isopropylmaleate. In Agrobacterium fabrum (strain C58 / ATCC 33970) (Agrobacterium tumefaciens (strain C58)), this protein is 3-isopropylmalate dehydratase large subunit.